Here is a 1175-residue protein sequence, read N- to C-terminus: Double-stranded RNA-specific adenosine deaminase (1175 aa).

Residues Arg30 and Arg42 each carry the asymmetric dimethylarginine modification. In terms of domain architecture, Z-binding 1 spans 135-201; the sequence is LSISQNPEQK…GKPPLWSLVP (67 aa). The segment at 135–204 is interaction with Z-DNA; it reads LSISQNPEQK…PLWSLVPLSQ (70 aa). A disordered region spans residues 207-239; that stretch reads TQPPRAVNSDKEVPRGEPDLDSEDGDPASDLEG. Basic and acidic residues predominate over residues 214 to 224; sequence NSDKEVPRGEP. Residues 225-235 are compositionally biased toward acidic residues; it reads DLDSEDGDPAS. A phosphoserine mark is found at Ser228 and Ser235. The region spanning 243-307 is the Z-binding 2 domain; the sequence is LLDMAEIKEK…ATPPIWYLTD (65 aa). The interval 315–384 is disordered; that stretch reads MKRSTHSGPA…ARPGPVRLRP (70 aa). Residues 357 to 376 show a composition bias toward basic and acidic residues; that stretch reads KRVENGQEPVTKYESRHEAR. Lys368 is covalently cross-linked (Glycyl lysine isopeptide (Lys-Gly) (interchain with G-Cter in SUMO); alternate). Lys368 is covalently cross-linked (Glycyl lysine isopeptide (Lys-Gly) (interchain with G-Cter in SUMO1); alternate). A Glycyl lysine isopeptide (Lys-Gly) (interchain with G-Cter in SUMO2); alternate cross-link involves residue Lys368. Ser431 carries the post-translational modification Phosphoserine. Positions 453-521 constitute a DRBM 1 domain; the sequence is NPVSGLLEYA…AVKAMAILLR (69 aa). Residues 524–561 are disordered; the sequence is KAKDSGQPEELSNCPMEEDPEKPAESQPPSSSATSLFS. Residues 550–561 are compositionally biased toward polar residues; it reads QPPSSSATSLFS. Residues Ser564, Ser579, and Ser586 each carry the phosphoserine modification. Residues 564 to 632 form the DRBM 2 domain; it reads SPVTTLLECM…AEEAMKALQE (69 aa). Positions 632–652 are disordered; sequence EEAANSADDQSGGANTDSLDE. Polar residues predominate over residues 638–648; the sequence is ADDQSGGANTD. The interval 662–671 is N-terminal extension of DRBM 3 and constituent of a bi-partite nuclear localization signal; sequence IGELVRYLNT. The DRBM 3 domain maps to 672–740; that stretch reads NPVGGLLEYA…ADAALRVLIG (69 aa). Residues 741-747 form a C-terminal extension of DRBM 3 and constituent of a bi-partite nuclear localization signal region; that stretch reads ESEKAEQ. Thr754 bears the Phosphothreonine mark. Phosphoserine is present on residues Ser760, Ser769, and Ser771. Lys821 participates in a covalent cross-link: Glycyl lysine isopeptide (Lys-Gly) (interchain with G-Cter in SUMO2). The 336-residue stretch at 832–1167 folds into the A to I editase domain; that stretch reads SLGTGNRCVK…ISKPQEEKNF (336 aa). Residue His856 coordinates Zn(2+). Glu858 functions as the Proton donor in the catalytic mechanism. Zn(2+)-binding residues include Cys912 and Cys982.

As to quaternary structure, homodimer. Homodimerization is essential for its catalytic activity. Isoform 5 can form heterodimers with ADARB1/ADAR2. Isoform 1 interacts with ILF2/NF45 and ILF3/NF90. Binding to ILF3/NF90 up-regulates ILF3-mediated gene expression. Isoform 1 and isoform 5 (via DRBM 3 domain) interact with TNPO1. Isoform 5 (via DRBM domains) interacts with XPO5. Isoform 1 and isoform 5 can interact with EIF2AK2/PKR and UPF1. Post-translationally, sumoylation reduces RNA-editing activity. In terms of tissue distribution, detected in brain.

Its subcellular location is the cytoplasm. The protein resides in the nucleus. The enzyme catalyses adenosine in double-stranded RNA + H2O + H(+) = inosine in double-stranded RNA + NH4(+). In terms of biological role, catalyzes the hydrolytic deamination of adenosine to inosine in double-stranded RNA (dsRNA) referred to as A-to-I RNA editing. This may affect gene expression and function in a number of ways that include mRNA translation by changing codons and hence the amino acid sequence of proteins; pre-mRNA splicing by altering splice site recognition sequences; RNA stability by changing sequences involved in nuclease recognition; genetic stability in the case of RNA virus genomes by changing sequences during viral RNA replication; and RNA structure-dependent activities such as microRNA production or targeting or protein-RNA interactions. Can edit both viral and cellular RNAs and can edit RNAs at multiple sites (hyper-editing) or at specific sites (site-specific editing). Its cellular RNA substrates include: bladder cancer-associated protein (BLCAP), neurotransmitter receptors for glutamate (GRIA2) and serotonin (HTR2C) and GABA receptor (GABRA3). Site-specific RNA editing of transcripts encoding these proteins results in amino acid substitutions which consequently alters their functional activities. Exhibits low-level editing at the GRIA2 Q/R site, but edits efficiently at the R/G site and HOTSPOT1. Does not affect polyomavirus replication but provides protection against virus-induced cytopathic effects. Essential for embryonic development and cell survival and plays a critical role in the maintenance of hematopoietic stem cells. This is Double-stranded RNA-specific adenosine deaminase (Adar) from Rattus norvegicus (Rat).